Reading from the N-terminus, the 239-residue chain is MVKGELLYEGKAKRIFRSSEEGELWVEYKDDATAFNGEKKETLAGKARLNNDISSLIFATLAKKGIPSHFIRRLSDTEQLVKQVDIIPLEVVVRNVVAGSMAKRLGIEEGIALKKPLVEFYYKDDALGDPLVTEDHIAILDVAAAEEVAQLKQMAAAVNNELIELFATVGVQLIDFKLEFGRTQAGELLLADEISPDTCRLWDKDTKERFDKDLFRRNLGNLQEGYQEILSRLGGLYHV.

It belongs to the SAICAR synthetase family.

It catalyses the reaction 5-amino-1-(5-phospho-D-ribosyl)imidazole-4-carboxylate + L-aspartate + ATP = (2S)-2-[5-amino-1-(5-phospho-beta-D-ribosyl)imidazole-4-carboxamido]succinate + ADP + phosphate + 2 H(+). It participates in purine metabolism; IMP biosynthesis via de novo pathway; 5-amino-1-(5-phospho-D-ribosyl)imidazole-4-carboxamide from 5-amino-1-(5-phospho-D-ribosyl)imidazole-4-carboxylate: step 1/2. This chain is Phosphoribosylaminoimidazole-succinocarboxamide synthase, found in Shouchella clausii (strain KSM-K16) (Alkalihalobacillus clausii).